The sequence spans 115 residues: Ribonuclease P protein component (115 aa).

It belongs to the RnpA family. In terms of assembly, consists of a catalytic RNA component (M1 or rnpB) and a protein subunit.

The catalysed reaction is Endonucleolytic cleavage of RNA, removing 5'-extranucleotides from tRNA precursor.. RNaseP catalyzes the removal of the 5'-leader sequence from pre-tRNA to produce the mature 5'-terminus. It can also cleave other RNA substrates such as 4.5S RNA. The protein component plays an auxiliary but essential role in vivo by binding to the 5'-leader sequence and broadening the substrate specificity of the ribozyme. This Staphylococcus aureus (strain Mu3 / ATCC 700698) protein is Ribonuclease P protein component.